The sequence spans 255 residues: Triosephosphate isomerase (255 aa).

Substrate is bound at residue 10–12 (NWK). H96 functions as the Electrophile in the catalytic mechanism. Residue E168 is the Proton acceptor of the active site. Substrate contacts are provided by residues G174, S213, and 234 to 235 (GG).

The protein belongs to the triosephosphate isomerase family. Homodimer.

It localises to the cytoplasm. The catalysed reaction is D-glyceraldehyde 3-phosphate = dihydroxyacetone phosphate. Its pathway is carbohydrate biosynthesis; gluconeogenesis. It participates in carbohydrate degradation; glycolysis; D-glyceraldehyde 3-phosphate from glycerone phosphate: step 1/1. Its function is as follows. Involved in the gluconeogenesis. Catalyzes stereospecifically the conversion of dihydroxyacetone phosphate (DHAP) to D-glyceraldehyde-3-phosphate (G3P). The polypeptide is Triosephosphate isomerase (Histophilus somni (strain 2336) (Haemophilus somnus)).